Here is a 375-residue protein sequence, read N- to C-terminus: MFITEIQLKNYRNYEHLELSFEDKVNVIIGENAQGKTNLMEAIYVLAMAKSHRTSNDRELIRWDEDYGNIKGRLQRRNSSISLELNISKKGKKAKLNQLEQQKLSQYIGEMNVVMFAPEDLNLVKGSPQVRRRFLDMELGQIAPVYLYELSQYQKVLTQRNHLLKKMQGNSKNEETMLDVFTLQLIEHGAKILRKRFEFLHLLQEWAAPIHRGISRGLEELEIVYKPSVDVSESMDLSKIKEVYYESFQSVKQREIFRGTTLLGPHRDDLQFFVNSKNVQVFGSQGQQRTTALSLKLAEIELIYSEVKEYPILLLDDVLSELDDYRQSHLLNTIQGKVQTFVTTTSVEGIEHETLKEAKTIHVTNGTVDCEIDRK.

30-37 (GENAQGKT) contacts ATP.

It belongs to the RecF family.

It localises to the cytoplasm. Functionally, the RecF protein is involved in DNA metabolism; it is required for DNA replication and normal SOS inducibility. RecF binds preferentially to single-stranded, linear DNA. It also seems to bind ATP. The sequence is that of DNA replication and repair protein RecF from Bacillus mycoides (strain KBAB4) (Bacillus weihenstephanensis).